Consider the following 235-residue polypeptide: Lipoprotein signal peptidase (235 aa).

The segment at 1 to 23 is disordered; it reads MTDETSGPAEPVTDAPGDAESPA. Transmembrane regions (helical) follow at residues 31–51, 84–104, and 108–128; these read LLLT…VLAV, GYTW…IWMG, and VSPW…GNLV. Residues D144 and D158 contribute to the active site. Residues 156–176 traverse the membrane as a helical segment; sequence VADPSVVGGAILLVALSLFGF. A disordered region spans residues 185-235; it reads RPGEDAEPSAGASDSTPEAPAADGPDKPAGPVGPEDAAEESKTVGHQAEPS. Over residues 201–218 the composition is skewed to low complexity; that stretch reads PEAPAADGPDKPAGPVGP.

The protein belongs to the peptidase A8 family.

It is found in the cell membrane. It carries out the reaction Release of signal peptides from bacterial membrane prolipoproteins. Hydrolyzes -Xaa-Yaa-Zaa-|-(S,diacylglyceryl)Cys-, in which Xaa is hydrophobic (preferably Leu), and Yaa (Ala or Ser) and Zaa (Gly or Ala) have small, neutral side chains.. It participates in protein modification; lipoprotein biosynthesis (signal peptide cleavage). Functionally, this protein specifically catalyzes the removal of signal peptides from prolipoproteins. This Mycolicibacterium smegmatis (strain ATCC 700084 / mc(2)155) (Mycobacterium smegmatis) protein is Lipoprotein signal peptidase.